The sequence spans 552 residues: Urocanate hydratase (552 aa).

NAD(+)-binding positions include 49–50 (GG), Q127, 173–175 (GMG), E193, R198, 239–240 (NA), 260–264 (QTSAH), 270–271 (YV), and Y319. Residue C407 is part of the active site. NAD(+) is bound at residue G489.

It belongs to the urocanase family. As to quaternary structure, composed of at least two subunits. Requires NAD(+) as cofactor.

The protein localises to the cytoplasm. The enzyme catalyses 4-imidazolone-5-propanoate = trans-urocanate + H2O. It participates in amino-acid degradation; L-histidine degradation into L-glutamate; N-formimidoyl-L-glutamate from L-histidine: step 2/3. Catalyzes the conversion of urocanate to 4-imidazolone-5-propionate. This chain is Urocanate hydratase, found in Bacillus subtilis (strain 168).